A 437-amino-acid chain; its full sequence is Enolase (437 aa).

A (2R)-2-phosphoglycerate-binding site is contributed by Gln162. The active-site Proton donor is Glu204. The Mg(2+) site is built by Asp251, Glu297, and Asp324. (2R)-2-phosphoglycerate contacts are provided by Lys349, Arg378, Ser379, and Lys400. The Proton acceptor role is filled by Lys349.

The protein belongs to the enolase family. Mg(2+) serves as cofactor.

Its subcellular location is the cytoplasm. The protein resides in the secreted. The protein localises to the cell surface. It catalyses the reaction (2R)-2-phosphoglycerate = phosphoenolpyruvate + H2O. The protein operates within carbohydrate degradation; glycolysis; pyruvate from D-glyceraldehyde 3-phosphate: step 4/5. In terms of biological role, catalyzes the reversible conversion of 2-phosphoglycerate (2-PG) into phosphoenolpyruvate (PEP). It is essential for the degradation of carbohydrates via glycolysis. The chain is Enolase from Chlorobium luteolum (strain DSM 273 / BCRC 81028 / 2530) (Pelodictyon luteolum).